A 491-amino-acid polypeptide reads, in one-letter code: Aspartyl/glutamyl-tRNA(Asn/Gln) amidotransferase subunit B (491 aa).

It belongs to the GatB/GatE family. GatB subfamily. In terms of assembly, heterotrimer of A, B and C subunits.

The enzyme catalyses L-glutamyl-tRNA(Gln) + L-glutamine + ATP + H2O = L-glutaminyl-tRNA(Gln) + L-glutamate + ADP + phosphate + H(+). It carries out the reaction L-aspartyl-tRNA(Asn) + L-glutamine + ATP + H2O = L-asparaginyl-tRNA(Asn) + L-glutamate + ADP + phosphate + 2 H(+). Allows the formation of correctly charged Asn-tRNA(Asn) or Gln-tRNA(Gln) through the transamidation of misacylated Asp-tRNA(Asn) or Glu-tRNA(Gln) in organisms which lack either or both of asparaginyl-tRNA or glutaminyl-tRNA synthetases. The reaction takes place in the presence of glutamine and ATP through an activated phospho-Asp-tRNA(Asn) or phospho-Glu-tRNA(Gln). This is Aspartyl/glutamyl-tRNA(Asn/Gln) amidotransferase subunit B from Prochlorococcus marinus (strain NATL2A).